The following is a 230-amino-acid chain: Uracil-DNA glycosylase (230 aa).

Aspartate 70 serves as the catalytic Proton acceptor.

This sequence belongs to the uracil-DNA glycosylase (UDG) superfamily. UNG family.

The protein localises to the cytoplasm. The catalysed reaction is Hydrolyzes single-stranded DNA or mismatched double-stranded DNA and polynucleotides, releasing free uracil.. Functionally, excises uracil residues from the DNA which can arise as a result of misincorporation of dUMP residues by DNA polymerase or due to deamination of cytosine. The protein is Uracil-DNA glycosylase of Pseudomonas savastanoi pv. phaseolicola (strain 1448A / Race 6) (Pseudomonas syringae pv. phaseolicola (strain 1448A / Race 6)).